Consider the following 133-residue polypeptide: ATP synthase epsilon chain, chloroplastic (133 aa).

The protein belongs to the ATPase epsilon chain family. As to quaternary structure, F-type ATPases have 2 components, CF(1) - the catalytic core - and CF(0) - the membrane proton channel. CF(1) has five subunits: alpha(3), beta(3), gamma(1), delta(1), epsilon(1). CF(0) has three main subunits: a, b and c.

It localises to the plastid. The protein resides in the chloroplast thylakoid membrane. In terms of biological role, produces ATP from ADP in the presence of a proton gradient across the membrane. This Thalassiosira pseudonana (Marine diatom) protein is ATP synthase epsilon chain, chloroplastic.